A 565-amino-acid polypeptide reads, in one-letter code: Putative pentatricopeptide repeat-containing protein At3g05240 (565 aa).

PPR repeat units follow at residues N37–P70, S71–P105, D106–V140, N141–W171, N172–A206, N207–P241, N250–R280, T281–P315, D316–K350, D351–K381, D382–T416, D418–L448, and T454–K484. The segment at I489 to M564 is type E motif.

This sequence belongs to the PPR family. PCMP-E subfamily.

This chain is Putative pentatricopeptide repeat-containing protein At3g05240 (PCMP-E82), found in Arabidopsis thaliana (Mouse-ear cress).